A 255-amino-acid polypeptide reads, in one-letter code: Protein DAL82 (255 aa).

The tract at residues P87–T149 is disordered. The segment covering P128–S138 has biased composition (basic and acidic residues).

Positive regulator of allophanate-induced genes in S.cerevisiae. In Saccharomyces cerevisiae (strain ATCC 204508 / S288c) (Baker's yeast), this protein is Protein DAL82 (DAL82).